A 1366-amino-acid polypeptide reads, in one-letter code: Collagen alpha-2(I) chain (1366 aa).

The first 22 residues, 1 to 22 (MLSFVDTRTLLLLAVTSCLATC), serve as a signal peptide directing secretion. Q23 carries the pyrrolidone carboxylic acid modification. Residues 23-79 (QSLQEATARKGPTGDRGPRGERGPPGPPGRDGDDGIPGPPGPPGPPGPPGLGGNFAA) constitute a propeptide, N-terminal propeptide. Positions 27-1131 (EATARKGPTG…PRSPPSLRPK (1105 aa)) are disordered. The segment covering 34–44 (PTGDRGPRGER) has biased composition (basic and acidic residues). Pro residues predominate over residues 59 to 71 (PGPPGPPGPPGPP). Allysine is present on K84. The segment covering 84 to 94 (KGVGLGPGPMG) has biased composition (gly residues). Over residues 95 to 132 (LMGPRGPPGASGAPGPQGFQGPAGEPGEPGQTGPAGAR) the composition is skewed to low complexity. Over residues 141 to 155 (AGEDGHPGKPGRPGE) the composition is skewed to basic and acidic residues. K177 carries the 5-hydroxylysine; alternate modification. K177 carries O-linked (Gal...) hydroxylysine; alternate glycosylation. Composition is skewed to low complexity over residues 225–254 (VGAPGPAGARGSDGSVGPVGPAGPIGSAGP), 279–293 (AGPRGEVGLPGVSGP), 300–321 (PGANGLTGAKGAAGLPGVAGAP), 330–345 (PGPVGAAGATGARGIV), 384–408 (NGEAGSAGPSGPPGLRGSPGSRGLP), 423–434 (RGATGPAGVRGP), 470–489 (LPGIDGRPGPIGPAGARGEP), and 513–531 (AGLAGARGAPGPDGNNGAQ). Over residues 538–547 (GVQGGKGEQG) the composition is skewed to gly residues. Residues 594 to 611 (PGESGAAGPSGPIGSRGP) are compositionally biased toward low complexity. A compositionally biased stretch (gly residues) spans 634–643 (GASGPGGLPG). Low complexity-rich tracts occupy residues 668-690 (NPGRDGARGAPGAMGAPGPAGAT) and 717-737 (VGPAGPNGFAGPAGAAGQPGA). Residues 738-747 (KGERGTKGPK) show a composition bias toward basic and acidic residues. The segment covering 756–765 (TGPIGSAGPS) has biased composition (low complexity). The span at 775–784 (GSRGDGGPPG) shows a compositional bias: gly residues. 5 stretches are compositionally biased toward low complexity: residues 785–795 (ATGFPGAAGRT), 863–876 (PQGLLGAPGILGLP), 893–932 (EPGPLGIAGPPGARGPPGAVGAPGVNGAPGEAGRDGNPGN), 951–974 (PGNIGPVGAVGAPGPHGPVGPTGK), and 981–1001 (PGPAGSVGPVGAVGPRGPSGP). Over residues 1005-1016 (RGDKGEPGEKGP) the composition is skewed to basic and acidic residues. The segment covering 1089 to 1103 (AGPPGPPGPPGPPGP) has biased composition (pro residues). The propeptide at 1120 to 1366 (DQPRSPPSLR…RVDVGPVCFK (247 aa)) is C-terminal propeptide. Residues 1133-1366 (YEVDATLKSL…RVDVGPVCFK (234 aa)) enclose the Fibrillar collagen NC1 domain. Disulfide bonds link C1163–C1195, C1203–C1364, and C1272–C1317. Ca(2+) is bound by residues D1181, N1183, Q1184, C1186, and D1189.

It belongs to the fibrillar collagen family. As to quaternary structure, trimers of one alpha 2(I) and two alpha 1(I) chains. Interacts (via C-terminus) with TMEM131 (via PapD-L domain); the interaction is direct and is involved in assembly and TRAPPIII ER-to-Golgi transport complex-dependent secretion of collagen. Prolines at the third position of the tripeptide repeating unit (G-X-Y) are hydroxylated in some or all of the chains. As to expression, forms the fibrils of tendon, ligaments and bones. In bones the fibrils are mineralized with calcium hydroxyapatite.

The protein localises to the secreted. It is found in the extracellular space. It localises to the extracellular matrix. Functionally, type I collagen is a member of group I collagen (fibrillar forming collagen). In Canis lupus familiaris (Dog), this protein is Collagen alpha-2(I) chain (COL1A2).